The following is a 157-amino-acid chain: Prefoldin subunit alpha (157 aa).

This sequence belongs to the prefoldin subunit alpha family. In terms of assembly, heterohexamer of two alpha and four beta subunits.

It localises to the cytoplasm. Its function is as follows. Molecular chaperone capable of stabilizing a range of proteins. Seems to fulfill an ATP-independent, HSP70-like function in archaeal de novo protein folding. This chain is Prefoldin subunit alpha, found in Methanopyrus kandleri (strain AV19 / DSM 6324 / JCM 9639 / NBRC 100938).